Reading from the N-terminus, the 255-residue chain is Post-GPI attachment to proteins factor 2 (255 aa).

5 helical membrane passes run 23-43 (LALV…IWSL), 111-131 (LGIL…CLSF), 143-163 (NAFV…YLLN), 185-205 (LFLV…RHNS), and 209-229 (AGVY…NMGF).

The protein belongs to the PGAP2 family.

The protein localises to the golgi apparatus membrane. It is found in the endoplasmic reticulum membrane. Functionally, involved in the lipid remodeling steps of GPI-anchor maturation. Required for stable expression of GPI-anchored proteins at the cell surface. The polypeptide is Post-GPI attachment to proteins factor 2 (Drosophila melanogaster (Fruit fly)).